Consider the following 326-residue polypeptide: Hairy/enhancer-of-split related with YRPW motif-like protein (326 aa).

The interval 1–56 (MKRPRAPSGSDGESDGPIDVGQENDLSQMARPLTTPSPSQMQARKKRRGIIEKRRR) is disordered. A transcriptional repression and interaction with NCOR1 and SIN3A region spans residues 42 to 111 (QARKKRRGII…GGTGFFDARA (70 aa)). A bHLH domain is found at 43 to 98 (ARKKRRGIIEKRRRDRINSSLSELRRLVPTAFEKQGSSKLEKAEVLQMTVDHLKML). Residues 116-153 (FRSIGFRECLTEVIRYLGVLEGPSSHADPVRIRLLSHL) form the Orange domain. Disordered stretches follow at residues 223 to 260 (HRPAGTIPPTRRNLLPSRGVTSTQRAHLPERPAAPPPT) and 272 to 306 (PIPPCSPTTAPGAGKSDDNVSGSISSPCPSGPTGR). Positions 292-305 (SGSISSPCPSGPTG) are enriched in low complexity.

This sequence belongs to the HEY family. As to quaternary structure, interacts with HES1, HDAC1, NCOR1 and SIN3A. Self-associates. Interacts with GATA4, GATA6, HEY1 and HEY2. In terms of tissue distribution, expressed in heart and at lower levels in brain, lung, muscle, ovary and testis.

It is found in the nucleus. Transcriptional repressor which binds preferentially to the canonical E box sequence 5'-CACGTG-3'. Downstream effector of Notch signaling required for cardiovascular development. Specifically required for the Notch-induced endocardial epithelial to mesenchymal transition, which is itself criticial for cardiac valve and septum development. Represses transcription by the cardiac transcriptional activators GATA4 and GATA6. The protein is Hairy/enhancer-of-split related with YRPW motif-like protein (Heyl) of Mus musculus (Mouse).